The chain runs to 307 residues: UDP-3-O-acyl-N-acetylglucosamine deacetylase (307 aa).

Positions 78, 241, and 245 each coordinate Zn(2+). The active-site Proton donor is His268.

It belongs to the LpxC family. The cofactor is Zn(2+).

The catalysed reaction is a UDP-3-O-[(3R)-3-hydroxyacyl]-N-acetyl-alpha-D-glucosamine + H2O = a UDP-3-O-[(3R)-3-hydroxyacyl]-alpha-D-glucosamine + acetate. The protein operates within glycolipid biosynthesis; lipid IV(A) biosynthesis; lipid IV(A) from (3R)-3-hydroxytetradecanoyl-[acyl-carrier-protein] and UDP-N-acetyl-alpha-D-glucosamine: step 2/6. In terms of biological role, catalyzes the hydrolysis of UDP-3-O-myristoyl-N-acetylglucosamine to form UDP-3-O-myristoylglucosamine and acetate, the committed step in lipid A biosynthesis. The chain is UDP-3-O-acyl-N-acetylglucosamine deacetylase from Bordetella avium (strain 197N).